The following is a 952-amino-acid chain: Isoleucine--tRNA ligase (952 aa).

The 'HIGH' region motif lies at 60 to 70 (PYANGSLHIGH). E562 provides a ligand contact to L-isoleucyl-5'-AMP. The 'KMSKS' region signature appears at 603–607 (KMSKS). K606 serves as a coordination point for ATP. Residues C921, C924, C941, and C944 each contribute to the Zn(2+) site.

Belongs to the class-I aminoacyl-tRNA synthetase family. IleS type 1 subfamily. As to quaternary structure, monomer. Zn(2+) serves as cofactor.

Its subcellular location is the cytoplasm. It catalyses the reaction tRNA(Ile) + L-isoleucine + ATP = L-isoleucyl-tRNA(Ile) + AMP + diphosphate. In terms of biological role, catalyzes the attachment of isoleucine to tRNA(Ile). As IleRS can inadvertently accommodate and process structurally similar amino acids such as valine, to avoid such errors it has two additional distinct tRNA(Ile)-dependent editing activities. One activity is designated as 'pretransfer' editing and involves the hydrolysis of activated Val-AMP. The other activity is designated 'posttransfer' editing and involves deacylation of mischarged Val-tRNA(Ile). In Microcystis aeruginosa (strain NIES-843 / IAM M-2473), this protein is Isoleucine--tRNA ligase.